The primary structure comprises 964 residues: Chromatin assembly factor 1 subunit A (964 aa).

Positions Met1–Lys49 are binds to PCNA. Residues Met1–Ala316 are binds to CBX1 chromo shadow domain. Residues Ser126, Ser141, and Ser144 each carry the phosphoserine modification. Residues Ala146–Gly232 are disordered. Basic and acidic residues predominate over residues Lys156–Leu172. Residue Lys185 forms a Glycyl lysine isopeptide (Lys-Gly) (interchain with G-Cter in SUMO1); alternate linkage. A Glycyl lysine isopeptide (Lys-Gly) (interchain with G-Cter in SUMO2); alternate cross-link involves residue Lys185. A PxVxL motif motif is present at residues Phe236–Leu249. Disordered stretches follow at residues Pro253 to Glu437 and Asp601 to Gly641. Over residues Leu284 to Pro298 the composition is skewed to low complexity. The residue at position 312 (Ser312) is a Phosphoserine. The stretch at Arg329 to Lys453 forms a coiled coil. A compositionally biased stretch (basic and acidic residues) spans Ser331–Glu437. Composition is skewed to acidic residues over residues Asp601 to Gly612 and Gly620 to Gly635. A necessary for homodimerization and competence for chromatin assembly region spans residues Ser644 to Phe680. Residues Arg662–Ser964 are binds to p60. The residue at position 723 (Thr723) is a Phosphothreonine. The tract at residues Arg769–Ala799 is disordered. Residues Asp770–Ser780 are compositionally biased toward low complexity. Phosphoserine occurs at positions 773, 783, 811, 876, and 881. Residues Glu859–Lys878 form a disordered region. Disordered stretches follow at residues Asp897–Gly920 and Ile933–Ser964. Over residues Asp904 to Gly920 the composition is skewed to acidic residues. The segment covering Met949–Ser964 has biased composition (polar residues). The residue at position 959 (Ser959) is a Phosphoserine.

It belongs to the CHAF1A family. As to quaternary structure, homodimer. Part of the CAF-1 complex that contains RBBP4, CHAF1B and CHAF1A. CHAF1A binds directly to CHAF1B. Only minor amounts of RBBP4 are complexed with CHAF1A and CHAF1B in G1 phase. Interacts with PCNA; the interaction is direct. Interacts (via the PxVxL motif) with CBX5; the interaction is direct. Interacts with MBD1. Interacts with histones H3.1, H3.2 and H3.1t.

The protein localises to the nucleus. In terms of biological role, acts as a component of the histone chaperone complex chromatin assembly factor 1 (CAF-1), which assembles histone octamers onto DNA during replication and repair. CAF-1 performs the first step of the nucleosome assembly process, bringing newly synthesized histones H3 and H4 to replicating DNA; histones H2A/H2B can bind to this chromatin precursor subsequent to DNA replication to complete the histone octamer. It may play a role in heterochromatin maintenance in proliferating cells by bringing newly synthesized cbx proteins to heterochromatic DNA replication foci. This is Chromatin assembly factor 1 subunit A (CHAF1A) from Bos taurus (Bovine).